The primary structure comprises 371 residues: tRNA-specific 2-thiouridylase MnmA (371 aa).

Residues 8-15 (GMSGGVDS) and methionine 34 each bind ATP. The interaction with target base in tRNA stretch occupies residues 94–96 (NPD). The Nucleophile role is filled by cysteine 99. A disulfide bridge links cysteine 99 with cysteine 195. Glycine 123 lines the ATP pocket. The interval 145 to 147 (KDQ) is interaction with tRNA. Catalysis depends on cysteine 195, which acts as the Cysteine persulfide intermediate. Residues 309 to 310 (RY) form an interaction with tRNA region.

This sequence belongs to the MnmA/TRMU family.

The protein resides in the cytoplasm. It carries out the reaction S-sulfanyl-L-cysteinyl-[protein] + uridine(34) in tRNA + AH2 + ATP = 2-thiouridine(34) in tRNA + L-cysteinyl-[protein] + A + AMP + diphosphate + H(+). In terms of biological role, catalyzes the 2-thiolation of uridine at the wobble position (U34) of tRNA, leading to the formation of s(2)U34. This Methylococcus capsulatus (strain ATCC 33009 / NCIMB 11132 / Bath) protein is tRNA-specific 2-thiouridylase MnmA.